The primary structure comprises 501 residues: Probable histidine--tRNA ligase, mitochondrial (501 aa).

The interval 32–54 (TNSNNNNNNNNNNNNNNNNNKNI) is disordered. Over residues 33–54 (NSNNNNNNNNNNNNNNNNNKNI) the composition is skewed to low complexity.

Belongs to the class-II aminoacyl-tRNA synthetase family.

It is found in the mitochondrion matrix. It catalyses the reaction tRNA(His) + L-histidine + ATP = L-histidyl-tRNA(His) + AMP + diphosphate + H(+). The chain is Probable histidine--tRNA ligase, mitochondrial (mhisS) from Dictyostelium discoideum (Social amoeba).